Here is a 406-residue protein sequence, read N- to C-terminus: MIGTRLPAWTRVLACGVAGLSLMTISAKAEDVITLGASVQLSGPVANTGRYYQDAYNITIDKINAAGGVKVDGKPYKLALKIYDNQSNVNLSVRQYTQLVTTDKVNFLLGPFASNFALADSVISEKYRIPMVQGGGASDEIYSRNFKYIFGTLAPASNYFGSTVEMLKGLDPKVTNVALVYADDSFDISVADGTRKLLKDAGFTIAADEKFATNSTDFTSLISQIKSKNVDAVLVAGHETEVLNFVRQSKSLAFDPKLYSFTVGVPTEDFRKALGKDANYAFGMTAWLPSADLKDRWFGDAAKFETEYKARFNYEPDYHAASGASDVEAFAEAIEKANSLDPQKVRDALASIKFDSLYGPIAFDKQGQINLPQIVVQVQDGKLVEIRGPAGQVNPPQYPMPAWNAR.

An N-terminal signal peptide occupies residues 1–29; the sequence is MIGTRLPAWTRVLACGVAGLSLMTISAKA.

Belongs to the leucine-binding protein family.

Component of an amino-acid transport system. This chain is Leu/Ile/Val-binding protein homolog 5, found in Brucella suis biovar 1 (strain 1330).